The chain runs to 184 residues: Ribosome-recycling factor (184 aa).

Belongs to the RRF family.

The protein resides in the cytoplasm. Responsible for the release of ribosomes from messenger RNA at the termination of protein biosynthesis. May increase the efficiency of translation by recycling ribosomes from one round of translation to another. The chain is Ribosome-recycling factor from Psychrobacter sp. (strain PRwf-1).